Reading from the N-terminus, the 628-residue chain is DNA mismatch repair protein MutL (628 aa).

The tract at residues 334-367 (SDFAQPSADNMPKPESPGAPAAHGRKDDAPAAHA) is disordered. The segment covering 357 to 367 (GRKDDAPAAHA) has biased composition (basic and acidic residues).

Belongs to the DNA mismatch repair MutL/HexB family.

Functionally, this protein is involved in the repair of mismatches in DNA. It is required for dam-dependent methyl-directed DNA mismatch repair. May act as a 'molecular matchmaker', a protein that promotes the formation of a stable complex between two or more DNA-binding proteins in an ATP-dependent manner without itself being part of a final effector complex. The chain is DNA mismatch repair protein MutL from Opitutus terrae (strain DSM 11246 / JCM 15787 / PB90-1).